A 657-amino-acid chain; its full sequence is Threonine--tRNA ligase (657 aa).

A TGS domain is found at 7–70; the sequence is SQTQVTVTLP…SEDASIEIVT (64 aa). A catalytic region spans residues 253-555; the sequence is DHRKLGAELE…LIEHTGGNFP (303 aa). C351, H402, and H532 together coordinate Zn(2+).

This sequence belongs to the class-II aminoacyl-tRNA synthetase family. Homodimer. It depends on Zn(2+) as a cofactor.

The protein resides in the cytoplasm. The enzyme catalyses tRNA(Thr) + L-threonine + ATP = L-threonyl-tRNA(Thr) + AMP + diphosphate + H(+). Functionally, catalyzes the attachment of threonine to tRNA(Thr) in a two-step reaction: L-threonine is first activated by ATP to form Thr-AMP and then transferred to the acceptor end of tRNA(Thr). Also edits incorrectly charged L-seryl-tRNA(Thr). The polypeptide is Threonine--tRNA ligase (Prosthecochloris aestuarii (strain DSM 271 / SK 413)).